Consider the following 226-residue polypeptide: ATP synthase F(0) complex subunit a (226 aa).

6 helical membrane passes run 12-32 (PTMMGLPIVILIIMFPSILFP), 68-88 (WTLMLMSLILFIGSTNLLGLL), 97-117 (QLSMNLGMAIPLWAGTVFMGF), 135-155 (IFLIPMLVIIETISLFIQPMA), 164-184 (ITAGHLLIHLIGGATLALMDI), and 189-209 (ALITFIILILLTILEFAVAMI).

The protein belongs to the ATPase A chain family. Component of the ATP synthase complex composed at least of ATP5F1A/subunit alpha, ATP5F1B/subunit beta, ATP5MC1/subunit c (homooctomer), MT-ATP6/subunit a, MT-ATP8/subunit 8, ATP5ME/subunit e, ATP5MF/subunit f, ATP5MG/subunit g, ATP5MK/subunit k, ATP5MJ/subunit j, ATP5F1C/subunit gamma, ATP5F1D/subunit delta, ATP5F1E/subunit epsilon, ATP5PF/subunit F6, ATP5PB/subunit b, ATP5PD/subunit d, ATP5PO/subunit OSCP. ATP synthase complex consists of a soluble F(1) head domain (subunits alpha(3) and beta(3)) - the catalytic core - and a membrane F(0) domain - the membrane proton channel (subunits c, a, 8, e, f, g, k and j). These two domains are linked by a central stalk (subunits gamma, delta, and epsilon) rotating inside the F1 region and a stationary peripheral stalk (subunits F6, b, d, and OSCP). Interacts with DNAJC30; interaction is direct.

It is found in the mitochondrion inner membrane. It carries out the reaction H(+)(in) = H(+)(out). In terms of biological role, subunit a, of the mitochondrial membrane ATP synthase complex (F(1)F(0) ATP synthase or Complex V) that produces ATP from ADP in the presence of a proton gradient across the membrane which is generated by electron transport complexes of the respiratory chain. ATP synthase complex consist of a soluble F(1) head domain - the catalytic core - and a membrane F(1) domain - the membrane proton channel. These two domains are linked by a central stalk rotating inside the F(1) region and a stationary peripheral stalk. During catalysis, ATP synthesis in the catalytic domain of F(1) is coupled via a rotary mechanism of the central stalk subunits to proton translocation. With the subunit c (ATP5MC1), forms the proton-conducting channel in the F(0) domain, that contains two crucial half-channels (inlet and outlet) that facilitate proton movement from the mitochondrial intermembrane space (IMS) into the matrix. Protons are taken up via the inlet half-channel and released through the outlet half-channel, following a Grotthuss mechanism. In Equus asinus (Donkey), this protein is ATP synthase F(0) complex subunit a.